Consider the following 273-residue polypeptide: Zinc finger protein 80 (273 aa).

7 C2H2-type zinc fingers span residues 49 to 71 (YKCK…QQIH), 77 to 99 (YECQ…VRIH), 103 to 127 (KPCK…HQIH), 133 to 155 (YECS…RMTH), 161 to 183 (FGCK…MKIH), 189 to 211 (YKCS…SMTH), and 217 to 239 (YECK…TRSH).

The protein belongs to the krueppel C2H2-type zinc-finger protein family.

It localises to the nucleus. Its function is as follows. May be involved in transcriptional regulation. In Pongo pygmaeus (Bornean orangutan), this protein is Zinc finger protein 80 (ZNF80).